The sequence spans 353 residues: Glutamate 5-kinase (353 aa).

Lys-8 serves as a coordination point for ATP. Substrate contacts are provided by Ser-47, Asp-134, and Asn-146. Residue 198-204 participates in ATP binding; it reads TGGIRSK. The PUA domain maps to 262–339; that stretch reads AGKIYVNKGA…SDLKKILGYE (78 aa).

This sequence belongs to the glutamate 5-kinase family.

It is found in the cytoplasm. The enzyme catalyses L-glutamate + ATP = L-glutamyl 5-phosphate + ADP. It participates in amino-acid biosynthesis; L-proline biosynthesis; L-glutamate 5-semialdehyde from L-glutamate: step 1/2. Functionally, catalyzes the transfer of a phosphate group to glutamate to form L-glutamate 5-phosphate. The chain is Glutamate 5-kinase from Thermotoga maritima (strain ATCC 43589 / DSM 3109 / JCM 10099 / NBRC 100826 / MSB8).